Reading from the N-terminus, the 22-residue chain is Cysteine-rich venom protein notescatin (22 aa).

Basic and acidic residues predominate over residues 1-15 (SNKKDYQKEIVDKHN). The segment at 1 to 22 (SNKKDYQKEIVDKHNALRRSVK) is disordered.

The protein belongs to the CRISP family. In terms of processing, contains 8 disulfide bonds. Expressed by the venom gland.

The protein localises to the secreted. The chain is Cysteine-rich venom protein notescatin from Notechis scutatus scutatus (Mainland tiger snake).